A 179-amino-acid polypeptide reads, in one-letter code: Guanosine-3',5'-bis(diphosphate) 3'-pyrophosphohydrolase MESH1 (179 aa).

At G2 the chain carries N-acetylglycine. N6-acetyllysine is present on K25. The HD domain occupies 32–127 (YINHPIGVAR…VKLADKLYNL (96 aa)). 3 residues coordinate Mn(2+): H35, H61, and D62. Catalysis depends on nucleophile residues E65 and D66. Position 97 is an N6-acetyllysine (K97). D122 provides a ligand contact to Mn(2+). K123 carries the N6-acetyllysine modification.

It belongs to the MESH1 family. It depends on Mn(2+) as a cofactor.

It catalyses the reaction guanosine 3',5'-bis(diphosphate) + H2O = GDP + diphosphate + H(+). Functionally, ppGpp hydrolyzing enzyme involved in starvation response. The sequence is that of Guanosine-3',5'-bis(diphosphate) 3'-pyrophosphohydrolase MESH1 (Hddc3) from Mus musculus (Mouse).